Here is a 572-residue protein sequence, read N- to C-terminus: Fatty acid amide hydrolase 1 (572 aa).

Residues 1–14 form the signal peptide; sequence MIFYLVLLVLGAIA. Positions 32–63 form a coiled coil; sequence IVAQRRRDDLSKNVEQARKAADKLDTQRRDWI. Active-site charge relay system residues include Lys139 and Ser214. Residues Ser214 and 235–238 each bind substrate; that span reads VGGS. Catalysis depends on Ser238, which acts as the Acyl-ester intermediate.

It belongs to the amidase family. As to expression, expressed in the pharynx, some pharyngeal neurons, the posterior intestine and anal depressor muscles.

The catalysed reaction is N-(5Z,8Z,11Z,14Z-eicosatetraenoyl)-ethanolamine + H2O = ethanolamine + (5Z,8Z,11Z,14Z)-eicosatetraenoate. The enzyme catalyses (9Z)-octadecenamide + H2O = (9Z)-octadecenoate + NH4(+). It carries out the reaction (5Z,8Z,11Z,14Z,17Z-eicosapentaenoyl) ethanolamine + H2O = (5Z,8Z,11Z,14Z,17Z)-eicosapentaenoate + ethanolamine. It catalyses the reaction N-(9Z-hexadecenoyl) ethanolamine + H2O = (9Z)-hexadecenoate + ethanolamine. The catalysed reaction is N-(9Z-octadecenoyl) ethanolamine + H2O = ethanolamine + (9Z)-octadecenoate. The enzyme catalyses N-octadecanoyl ethanolamine + H2O = octadecanoate + ethanolamine. It carries out the reaction N-docosanoyl-ethanolamine + H2O = docosanoate + ethanolamine. It catalyses the reaction N-(15Z-tetracosenoyl)-ethanolamine + H2O = (15Z)-tetracosenoate + ethanolamine. The catalysed reaction is N-hexadecanoylethanolamine + H2O = ethanolamine + hexadecanoate. The enzyme catalyses N-(9Z,12Z-octadecadienoyl)-ethanolamine + H2O = ethanolamine + (9Z,12Z)-octadecadienoate. It carries out the reaction (9Z)-octadecenoate + glycine = N-(9Z-octadecenoyl)glycine + H2O. It catalyses the reaction N-(5Z,8Z,11Z,14Z)-eicosatetraenoyl-glycine + H2O = (5Z,8Z,11Z,14Z)-eicosatetraenoate + glycine. The catalysed reaction is N-(5Z,8Z,11Z,14Z-eicosatetraenoyl)-L-serine + H2O = (5Z,8Z,11Z,14Z)-eicosatetraenoate + L-serine. Catalyzes the hydrolysis of endogenous amidated lipids like anandamide (AEA or N-(5Z,8Z,11Z,14Z-eicosatetraenoyl)-ethanolamine) and eicosapentaneoyl ethanolamide (EPEA or (5Z,8Z,11Z,14Z,17Z-eicosapentaenoyl) ethanolamine), as well as other fatty amides, to their corresponding fatty acids, thereby regulating the signaling functions of these molecules. EPEA promotes dauer formation and may constitute a signal of high nutrient availability. Breakdown of EPEA may promote lifespan extension when nutrient availability is high. Facilitates axon regeneration after injury by degradating inhibitory compounds such as AEA. FAAH cooperates with PM20D1 in the hydrolysis of amino acid-conjugated fatty acids such as N-fatty acyl glycine and N-fatty acyl-L-serine, thereby acting as a physiological regulator of specific subsets of intracellular, but not of extracellular, N-fatty acyl amino acids. This chain is Fatty acid amide hydrolase 1, found in Caenorhabditis elegans.